A 713-amino-acid polypeptide reads, in one-letter code: MLSSSSMSSSSLSARFCFNHECFEFKLDHCRPGWRLRSGDFVDLCDRCASAYEQGKFCDVFHQRASGWRCCESCGKRIHCGCIASASAYTLMDAGGIECLACARKKFALGPNFSPSPSFLFQSPISEKFKDLSINWSSSTRSNQISYQPPSCLDPSVLQFDFRNRGGNNEFSQPASKERVTACTMEKKRGMNDMIGKLMSENSKHYRVSPFPNVNVYHPLISLKEGPCGTQLAFPVPITTPIEKTGHSRLDGSNLWHTRNSSPLSRLHNDLNGGADSPFESKSRNVMAHLETPGKYQVVPRFWPKVSYKNQVLQNQSKESESVVTPLFEKILSATDTGKRLVLPKKYAEAFLPQLSHTKGVPLTVQDPMGKEWRFQFRFWPSSKGRIYVLEGVTPFIQTLQLQAGDTVIFSRLDPERKLILGFRKASITQSSDQADPADMHSPFEVKKSAYITKETPGVECSSGKKKSSMMITRSKRQKVEKGDDNLLKLTWEEAQGFLLPPPNLTPSRVVIEDYEFEEYEEAPIIGKPTDVAGSTCTEVEGLLISPTTTKHPRHRDGCTCIICIQSPSGIGPKHDRCCSCAVCDTNKRRRRSLLLRREKKQMEKEDNARKLLEQLNSDNGLHQSANNSENHERHASPLKVQLDLNFKPEKDEESLPGSNKTTKSETLPHDDTVKSSFTSPSSSSAHSQNNKEDEGKLKTTTEIADTTTTSSM.

The TF-B3 DNA-binding region spans 328–427 (FEKILSATDT…KLILGFRKAS (100 aa)). Disordered regions lie at residues 459–478 (VECSSGKKKSSMMITRSKRQ) and 616–713 (LNSD…TSSM). Residues 464 to 477 (GKKKSSMMITRSKR) show a composition bias toward basic residues. Positions 616-629 (LNSDNGLHQSANNS) are enriched in polar residues. The segment covering 663–674 (TKSETLPHDDTV) has biased composition (basic and acidic residues). The segment covering 676–688 (SSFTSPSSSSAHS) has biased composition (low complexity). Over residues 690–700 (NNKEDEGKLKT) the composition is skewed to basic and acidic residues. Low complexity predominate over residues 701-713 (TTEIADTTTTSSM).

The protein localises to the nucleus. In terms of biological role, may be involved in plant development. The polypeptide is B3 domain-containing transcription factor VAL3 (VAL3) (Arabidopsis thaliana (Mouse-ear cress)).